A 24-amino-acid polypeptide reads, in one-letter code: Cytochrome c3-2 (24 aa).

The disordered stretch occupies residues Gly1–Pro24.

In terms of processing, binds 4 heme groups per subunit.

Its subcellular location is the periplasm. Its function is as follows. Participates in sulfate respiration coupled with phosphorylation by transferring electrons from the enzyme dehydrogenase to ferredoxin. The chain is Cytochrome c3-2 from Nitratidesulfovibrio vulgaris (Desulfovibrio vulgaris).